The following is a 141-amino-acid chain: Hemoglobin subunit alpha-1/2 (141 aa).

Positions 1–141 (VLSPADKANV…VGTVLTSKYR (141 aa)) constitute a Globin domain. Ser-3 carries the post-translational modification Phosphoserine. N6-succinyllysine occurs at positions 7 and 11. Position 16 is an N6-acetyllysine; alternate (Lys-16). An N6-succinyllysine; alternate modification is found at Lys-16. At Tyr-24 the chain carries Phosphotyrosine. Phosphoserine is present on Ser-35. N6-succinyllysine is present on Lys-40. Ser-49 is modified (phosphoserine). An O2-binding site is contributed by His-58. His-87 contributes to the heme b binding site. Position 102 is a phosphoserine (Ser-102). A Phosphothreonine modification is found at Thr-108. Phosphoserine occurs at positions 124 and 131. 2 positions are modified to phosphothreonine: Thr-134 and Thr-137. At Ser-138 the chain carries Phosphoserine.

The protein belongs to the globin family. Heterotetramer of two alpha chains and two beta chains. Red blood cells.

Its function is as follows. Involved in oxygen transport from the lung to the various peripheral tissues. This Macroderma gigas (Australian ghost bat) protein is Hemoglobin subunit alpha-1/2.